Here is a 411-residue protein sequence, read N- to C-terminus: Glycogen synthase kinase-3 homolog MsK-2 (411 aa).

The region spanning 74–358 (YMAERAVGQG…ALEALVHPFF (285 aa)) is the Protein kinase domain. ATP-binding positions include 80–88 (VGQGSFGVV) and lysine 103. Aspartate 199 (proton acceptor) is an active-site residue. A Phosphotyrosine modification is found at tyrosine 234.

The protein belongs to the protein kinase superfamily. CMGC Ser/Thr protein kinase family. GSK-3 subfamily. In terms of tissue distribution, absent in leaves and petioles while a moderate expression is seen in the stems, roots, and nodes.

The catalysed reaction is L-seryl-[protein] + ATP = O-phospho-L-seryl-[protein] + ADP + H(+). It catalyses the reaction L-threonyl-[protein] + ATP = O-phospho-L-threonyl-[protein] + ADP + H(+). The polypeptide is Glycogen synthase kinase-3 homolog MsK-2 (MSK-2) (Medicago sativa (Alfalfa)).